The chain runs to 318 residues: Taste receptor type 2 member 60 (318 aa).

The Extracellular segment spans residues 1 to 7 (MNGDHMV). The helical transmembrane segment at 8–28 (LGSSVTDQKAIILVIILLLLC) threads the bilayer. The Cytoplasmic segment spans residues 29 to 40 (LVAIAGNGFITA). The chain crosses the membrane as a helical span at residues 41-61 (ALGVEWVLRGTLLPCDKLLVS). Residues 62–88 (LRASRFCLQWVVMGKTIYVLLYPTAFP) lie on the Extracellular side of the membrane. The chain crosses the membrane as a helical span at residues 89 to 109 (YNPVLQFLAFQWDFLNAATLW). At 110 to 128 (FSSWLSVFYCVKIATFTHP) the chain is on the cytoplasmic side. The chain crosses the membrane as a helical span at residues 129–149 (VFLWLKHKLSEWVPWMFFSSV). Residues 150-183 (GLSSFTTILFFIGNHSIYQNYLRNHLQPWNVTGN) lie on the Extracellular side of the membrane. N-linked (GlcNAc...) asparagine glycans are attached at residues N163 and N179. Residues 184 to 204 (SIWSYCEKFYLFPVKMITWTM) traverse the membrane as a helical segment. Residues 205–234 (PTAVFFICMILLITSLGRHMEKALLTTSGF) are Cytoplasmic-facing. Residues 235–255 (REPSVQAHVKALLALLSLAML) traverse the membrane as a helical segment. Residues 256–264 (FISYFLSLV) lie on the Extracellular side of the membrane. A helical membrane pass occupies residues 265-285 (LSAAGIFPPLDFKFWVGESVI). The Cytoplasmic portion of the chain corresponds to 286-318 (YLCAGVHPIILLFSNRRLRAVLERCRSSRCRTP).

It belongs to the G-protein coupled receptor T2R family.

The protein resides in the membrane. Functionally, receptor that may play a role in the perception of bitterness and is gustducin-linked. May play a role in sensing the chemical composition of the gastrointestinal content. The activity of this receptor may stimulate alpha gustducin, mediate PLC-beta-2 activation and lead to the gating of TRPM5. In Macaca mulatta (Rhesus macaque), this protein is Taste receptor type 2 member 60 (TAS2R60).